The sequence spans 645 residues: ATP-dependent DNA helicase Rep (645 aa).

In terms of domain architecture, UvrD-like helicase ATP-binding spans 1 to 280 (MSLNFSQKNA…IKMEHNYRSS (280 aa)). ATP is bound by residues 22–29 (AGAGSGKT) and Arg-278. A UvrD-like helicase C-terminal domain is found at 281-562 (GRILKAANSL…QLMTLHASKG (282 aa)).

This sequence belongs to the helicase family. UvrD subfamily. As to quaternary structure, homodimer.

It carries out the reaction Couples ATP hydrolysis with the unwinding of duplex DNA by translocating in the 3'-5' direction.. It catalyses the reaction ATP + H2O = ADP + phosphate + H(+). In terms of biological role, rep helicase is a single-stranded DNA-dependent ATPase involved in DNA replication; it can initiate unwinding at a nick in the DNA. It binds to the single-stranded DNA and acts in a progressive fashion along the DNA in the 3' to 5' direction. The protein is ATP-dependent DNA helicase Rep of Buchnera aphidicola subsp. Acyrthosiphon pisum (strain APS) (Acyrthosiphon pisum symbiotic bacterium).